A 362-amino-acid chain; its full sequence is GDSL esterase/lipase 6 (362 aa).

The signal sequence occupies residues 1–23 (MSSSSSMDLLMCLLLLISPVVLA). Residue Ser-38 is the Nucleophile of the active site. N-linked (GlcNAc...) asparagine glycosylation is found at Asn-50, Asn-103, Asn-107, Asn-195, and Asn-296. Active-site residues include Asp-323 and His-326.

This sequence belongs to the 'GDSL' lipolytic enzyme family.

The protein localises to the secreted. This Arabidopsis thaliana (Mouse-ear cress) protein is GDSL esterase/lipase 6 (GLIP6).